The primary structure comprises 437 residues: Chromosomal replication initiator protein DnaA (437 aa).

Residues 1 to 74 (MNLAWNKILE…EACGDKIPVE (74 aa)) are domain I, interacts with DnaA modulators. A domain II region spans residues 74–98 (EILIETKATSPLQSFLEKSFDQKDF). The interval 99–315 (QFNPDYTFET…GALNDIYLYK (217 aa)) is domain III, AAA+ region. ATP contacts are provided by Gly142, Gly144, Lys145, and Thr146. A domain IV, binds dsDNA region spans residues 316–437 (KSYSLLFLNL…ERISSKYKLQ (122 aa)).

The protein belongs to the DnaA family. Oligomerizes as a right-handed, spiral filament on DNA at oriC.

It localises to the cytoplasm. Functionally, plays an essential role in the initiation and regulation of chromosomal replication. ATP-DnaA binds to the origin of replication (oriC) to initiate formation of the DNA replication initiation complex once per cell cycle. Binds the DnaA box (a 9 base pair repeat at the origin) and separates the double-stranded (ds)DNA. Forms a right-handed helical filament on oriC DNA; dsDNA binds to the exterior of the filament while single-stranded (ss)DNA is stabiized in the filament's interior. The ATP-DnaA-oriC complex binds and stabilizes one strand of the AT-rich DNA unwinding element (DUE), permitting loading of DNA polymerase. After initiation quickly degrades to an ADP-DnaA complex that is not apt for DNA replication. Binds acidic phospholipids. In Leptospira borgpetersenii serovar Hardjo-bovis (strain JB197), this protein is Chromosomal replication initiator protein DnaA.